We begin with the raw amino-acid sequence, 177 residues long: Alkyl hydroperoxide reductase AhpD (177 aa).

C130 acts as the Proton donor in catalysis. C130 and C133 are oxidised to a cystine. C133 acts as the Cysteine sulfenic acid (-SOH) intermediate in catalysis.

This sequence belongs to the AhpD family. In terms of assembly, homotrimer.

The enzyme catalyses N(6)-[(R)-dihydrolipoyl]-L-lysyl-[lipoyl-carrier protein] + a hydroperoxide = N(6)-[(R)-lipoyl]-L-lysyl-[lipoyl-carrier protein] + an alcohol + H2O. Antioxidant protein with alkyl hydroperoxidase activity. Required for the reduction of the AhpC active site cysteine residues and for the regeneration of the AhpC enzyme activity. This is Alkyl hydroperoxide reductase AhpD from Corynebacterium aurimucosum (strain ATCC 700975 / DSM 44827 / CIP 107346 / CN-1) (Corynebacterium nigricans).